The primary structure comprises 472 residues: MIPIIALVGRPNVGKSTLFNKLTHTNDAIVADYSGLTRDRKYGHAKWKNYNFIVIDTGGIGISKKGLAIHIIKQSLLAIKEADVIFFVVDAITGLMIEDQSIAKYLRKLQKPTFIIINKIDGIDITQVKLQFYAINIGQIFPIAALQGRGINILLKAVFLSLIQNNIPLTNNSFTESTKYIDQLLMPIKLAIVGSSNVGKSTLANSFLGEERVVVFDMPGTTRDSTYIPMIRAEREYVLIDTAGLRKRSKITDIAEKLSTVKTLQSIEESNVVLLVLDAHKGISDQDLSLLSLIIDSGRAFVIVVNKWDNLSIERRNSIKDTLAYRLSFINFARIHFISALYGTNIDQIFQSVNEAYHCSTKRISTALLTKILHIAIKEHQPPIISGYRVKLKYAHYGGYNPPIVVIHGNKATELPVSYKRYLSNFFRHSLQIMGTPIRIQFNEPANPFIHHKSIPNKLRKLLLSKRNIKIK.

2 EngA-type G domains span residues 3-166 (PIIA…IQNN) and 188-361 (IKLA…HCST). Residues 9-16 (GRPNVGKS), 56-60 (DTGGI), 118-121 (NKID), 194-201 (GSSNVGKS), 241-245 (DTAGL), and 306-309 (NKWD) contribute to the GTP site. Residues 362–446 (KRISTALLTK…PIRIQFNEPA (85 aa)) form the KH-like domain.

The protein belongs to the TRAFAC class TrmE-Era-EngA-EngB-Septin-like GTPase superfamily. EngA (Der) GTPase family. Associates with the 50S ribosomal subunit.

GTPase that plays an essential role in the late steps of ribosome biogenesis. The sequence is that of GTPase Der from Baumannia cicadellinicola subsp. Homalodisca coagulata.